A 426-amino-acid chain; its full sequence is Histidine--tRNA ligase (426 aa).

Belongs to the class-II aminoacyl-tRNA synthetase family. Homodimer.

It is found in the cytoplasm. The catalysed reaction is tRNA(His) + L-histidine + ATP = L-histidyl-tRNA(His) + AMP + diphosphate + H(+). In Microcystis aeruginosa (strain NIES-843 / IAM M-2473), this protein is Histidine--tRNA ligase.